Here is an 87-residue protein sequence, read N- to C-terminus: Envelope glycoprotein N (87 aa).

The signal sequence occupies residues 1 to 24 (MGSITASFILITMQILFFCEDSSG). The Virion surface segment spans residues 25 to 48 (EPNFAERNFWHASCSARGVYIDGS). Residues 49–69 (MITTLFFYASLLGVCVALISL) form a helical membrane-spanning segment. Over 70–87 (AYHACFRLFTRSVLRSTW) the chain is Intravirion.

This sequence belongs to the herpesviridae glycoprotein N family. In terms of assembly, interacts (via N-terminus) with gM (via N-terminus). The gM-gN heterodimer forms the gCII complex.

The protein localises to the virion membrane. Its subcellular location is the host membrane. It localises to the host Golgi apparatus. The protein resides in the host trans-Golgi network. Its function is as follows. Envelope glycoprotein necessary for proper maturation of gM and modulation of its membrane fusion activity. Also plays a critical role in virion morphogenesis. The chain is Envelope glycoprotein N from Varicella-zoster virus (strain Dumas) (HHV-3).